The sequence spans 348 residues: Histidinol-phosphate aminotransferase (348 aa).

Lys-207 bears the N6-(pyridoxal phosphate)lysine mark.

This sequence belongs to the class-II pyridoxal-phosphate-dependent aminotransferase family. Histidinol-phosphate aminotransferase subfamily. As to quaternary structure, homodimer. The cofactor is pyridoxal 5'-phosphate.

The catalysed reaction is L-histidinol phosphate + 2-oxoglutarate = 3-(imidazol-4-yl)-2-oxopropyl phosphate + L-glutamate. It functions in the pathway amino-acid biosynthesis; L-histidine biosynthesis; L-histidine from 5-phospho-alpha-D-ribose 1-diphosphate: step 7/9. This chain is Histidinol-phosphate aminotransferase, found in Rippkaea orientalis (strain PCC 8801 / RF-1) (Cyanothece sp. (strain PCC 8801)).